Here is a 45-residue protein sequence, read N- to C-terminus: Metallothionein-like protein 1A (45 aa).

Belongs to the metallothionein superfamily. Type 15 family. As to expression, expressed in phloem and mesophyll cells of leaves, vascular tissues of cotyledons, sepals and petals. Expressed in anthers. Expressed in root endodermis and at lower levels in cortex of mature region of roots.

Functionally, metallothioneins have a high content of cysteine residues that bind various heavy metals. Functions as a metal chelator of copper (Cu) and zinc (Zn). Plays a role in Cu homeostasis in the roots under elevated Cu concentration. Functions cooperatively with the phytochelatin synthase PCS1 to protect plants from Cu and cadmium (Cd) toxicity. Plays a role in Cu homeostasis, specifically in the remobilization of Cu from senescing leaves. The mobilization of Cu from internal sources is important for seed development. Confers tolerance to Cd and plays a role in Cd and Zn homeostasis. The chain is Metallothionein-like protein 1A (MT1A) from Arabidopsis thaliana (Mouse-ear cress).